Here is a 155-residue protein sequence, read N- to C-terminus: Ribonuclease H (155 aa).

Positions 1-142 (MLKQVEIFTD…CDELARAAAM (142 aa)) constitute an RNase H type-1 domain. Mg(2+) is bound by residues Asp10, Glu48, Asp70, and Asp134.

This sequence belongs to the RNase H family. In terms of assembly, monomer. Mg(2+) is required as a cofactor.

The protein resides in the cytoplasm. The enzyme catalyses Endonucleolytic cleavage to 5'-phosphomonoester.. In terms of biological role, endonuclease that specifically degrades the RNA of RNA-DNA hybrids. The chain is Ribonuclease H from Salmonella paratyphi C (strain RKS4594).